The sequence spans 195 residues: MPTLEPSVLDQLFHEARTHNVWLDNPVDDELLHTLYDTVKYGPTAANSTPARFVFVKSAAAKEQLVPCMSAGNQEKTRQAPVTVIVAYDTQFHEQLPKLFPHVDARSWYAGDQARINAAALMNSSLQGGYLVIAARALGLDCGPMGGFDADKVNATFFPDGQWKVNFICNLGYGDTSKVHPRNPRLTFEEACRVL.

Belongs to the nitroreductase family. HadB/RutE subfamily. FMN serves as cofactor.

The sequence is that of Putative NADH dehydrogenase/NAD(P)H nitroreductase RSc1004 from Ralstonia nicotianae (strain ATCC BAA-1114 / GMI1000) (Ralstonia solanacearum).